An 898-amino-acid chain; its full sequence is Alanine--tRNA ligase (898 aa).

Positions 564, 568, 682, and 686 each coordinate Zn(2+).

The protein belongs to the class-II aminoacyl-tRNA synthetase family. Requires Zn(2+) as cofactor.

The protein resides in the cytoplasm. It carries out the reaction tRNA(Ala) + L-alanine + ATP = L-alanyl-tRNA(Ala) + AMP + diphosphate. Its function is as follows. Catalyzes the attachment of alanine to tRNA(Ala) in a two-step reaction: alanine is first activated by ATP to form Ala-AMP and then transferred to the acceptor end of tRNA(Ala). Also edits incorrectly charged Ser-tRNA(Ala) and Gly-tRNA(Ala) via its editing domain. The polypeptide is Alanine--tRNA ligase (Beijerinckia indica subsp. indica (strain ATCC 9039 / DSM 1715 / NCIMB 8712)).